We begin with the raw amino-acid sequence, 320 residues long: Cilia- and flagella-associated protein 77 (320 aa).

The segment at 1–27 (MPEARSSGPDLTRWRKQQQPVRRTVSQ) is disordered. Residues 17-27 (QQQPVRRTVSQ) are compositionally biased toward polar residues.

This sequence belongs to the CFAP77 family. In terms of assembly, microtubule inner protein component of sperm flagellar doublet microtubules. As to expression, expressed in airway epithelial cells.

The protein resides in the cytoplasm. It is found in the cytoskeleton. Its subcellular location is the cilium axoneme. The protein localises to the flagellum axoneme. In terms of biological role, microtubule inner protein (MIP) part of the dynein-decorated doublet microtubules (DMTs) in cilia axoneme, which is required for motile cilia beating. This Homo sapiens (Human) protein is Cilia- and flagella-associated protein 77.